Here is a 632-residue protein sequence, read N- to C-terminus: Chaperone protein DnaK (632 aa).

Threonine 198 is modified (phosphothreonine; by autocatalysis). The tract at residues 599 to 632 (YKKAGASQQGAGSTTQSKKEEDVIEAEVEDKDNK) is disordered. Residues 604 to 614 (ASQQGAGSTTQ) show a composition bias toward polar residues. The span at 620–632 (DVIEAEVEDKDNK) shows a compositional bias: acidic residues.

This sequence belongs to the heat shock protein 70 family.

Functionally, acts as a chaperone. The protein is Chaperone protein DnaK of Thermodesulfovibrio yellowstonii (strain ATCC 51303 / DSM 11347 / YP87).